The chain runs to 240 residues: NADH-quinone oxidoreductase subunit C (240 aa).

The tract at residues 1-82 is disordered; the sequence is MSEEEKPKPK…PVDENRDPEP (82 aa). Low complexity predominate over residues 11–20; that stretch reads LSPALAAKMA. The span at 67 to 82 shows a compositional bias: basic and acidic residues; it reads DKPKAEPVDENRDPEP.

It belongs to the complex I 30 kDa subunit family. As to quaternary structure, NDH-1 is composed of 14 different subunits. Subunits NuoB, C, D, E, F, and G constitute the peripheral sector of the complex.

Its subcellular location is the cell inner membrane. It catalyses the reaction a quinone + NADH + 5 H(+)(in) = a quinol + NAD(+) + 4 H(+)(out). In terms of biological role, NDH-1 shuttles electrons from NADH, via FMN and iron-sulfur (Fe-S) centers, to quinones in the respiratory chain. The immediate electron acceptor for the enzyme in this species is believed to be a menaquinone. Couples the redox reaction to proton translocation (for every two electrons transferred, four hydrogen ions are translocated across the cytoplasmic membrane), and thus conserves the redox energy in a proton gradient. The chain is NADH-quinone oxidoreductase subunit C from Chloroherpeton thalassium (strain ATCC 35110 / GB-78).